A 448-amino-acid polypeptide reads, in one-letter code: UDP-glycosyltransferase 79B5 (448 aa).

UDP-alpha-D-glucose contacts are provided by residues T261, L320 to Q322, H337 to E345, and L359 to Q362.

This sequence belongs to the UDP-glycosyltransferase family.

This Arabidopsis thaliana (Mouse-ear cress) protein is UDP-glycosyltransferase 79B5 (UGT79B5).